The sequence spans 500 residues: L-arabinose isomerase (500 aa).

4 residues coordinate Mn(2+): Glu-306, Glu-333, His-350, and His-450.

This sequence belongs to the arabinose isomerase family. As to quaternary structure, homohexamer. The cofactor is Mn(2+).

The enzyme catalyses beta-L-arabinopyranose = L-ribulose. Its pathway is carbohydrate degradation; L-arabinose degradation via L-ribulose; D-xylulose 5-phosphate from L-arabinose (bacterial route): step 1/3. Its function is as follows. Catalyzes the conversion of L-arabinose to L-ribulose. In Shigella boydii serotype 18 (strain CDC 3083-94 / BS512), this protein is L-arabinose isomerase.